The primary structure comprises 181 residues: Endoribonuclease YbeY (181 aa).

Zn(2+)-binding residues include histidine 115, histidine 119, and histidine 125.

It belongs to the endoribonuclease YbeY family. Zn(2+) is required as a cofactor.

Its subcellular location is the cytoplasm. Functionally, single strand-specific metallo-endoribonuclease involved in late-stage 70S ribosome quality control and in maturation of the 3' terminus of the 16S rRNA. The chain is Endoribonuclease YbeY from Bifidobacterium adolescentis (strain ATCC 15703 / DSM 20083 / NCTC 11814 / E194a).